Consider the following 312-residue polypeptide: 2-aminophenol 1,6-dioxygenase subunit beta (312 aa).

The Fe cation site is built by H13, H62, and E251.

This sequence belongs to the LigB/MhpB extradiol dioxygenase family. The APD complex is a heterotetramer of 2 alpha (CnbCa) and 2 beta (CnbCb) subunits. The cofactor is Fe(2+).

The enzyme catalyses 2-aminophenol + O2 = 2-aminomuconate 6-semialdehyde. It catalyses the reaction 2-amino-5-chlorophenol + O2 = 2-amino-5-chloromuconate 6-semialdehyde. The protein operates within xenobiotic degradation; nitrobenzene degradation. It functions in the pathway xenobiotic degradation; 4-chloronitrobenzene degradation. With respect to regulation, complete loss of activity in the presence of Ni(2+), Co(2+), Cd(2+), Zn(2+) and hydrogen peroxide, however activity with hydrogen peroxide partially restored upon addition of excess ascorbate. Partially inhibited by Fe(2+), Mg(2+), Ca(2+), Mn(2+), Cu(2+) and also by EDTA, at 2 mM concentration. Total activity inhibited in the presence of catechol or 4-nitrocatechol but completely restored after removal of catechol and addition of 2 mM Fe(2+) and 5 mM ascorbate. Component of the 2-aminophenol 1,6-dioxygenase (APD) complex that catalyzes the ring fission of 2-aminophenol to produce 2-aminomuconic semialdehyde. CnbCb seems to be the catalytic subunit of the complex. Also active on other substrates such as 2-amino-5-chlorophenol (68% activity), protocatechuate (33% activity) and catechol (5% activity). Both 2-aminophenol and 2-amino-5-cholorophenol are likely native substrates for this dioxygenase which is involved in the reductive degradation pathway of both nitrobenzene (NB) and 4-chloronitrobenzene (4-CNB), allowing C.testosteroni strain CNB-1 to grow on these compounds as sole source of carbon, nitrogen, and energy. The sequence is that of 2-aminophenol 1,6-dioxygenase subunit beta from Comamonas testosteroni (Pseudomonas testosteroni).